The primary structure comprises 156 residues: Transcription factor MafK (156 aa).

A disordered region spans residues 1–21 (MTTNPKPNKALKVKEESGENA). The tract at residues 51-76 (RLKQRRRTLKNRGYAASCRIKRVTQK) is basic motif. The 64-residue stretch at 51–114 (RLKQRRRTLK…DALRSKYEAL (64 aa)) folds into the bZIP domain. The tract at residues 79-93 (LERQRVELQQEVEKL) is leucine-zipper.

The protein belongs to the bZIP family. Maf subfamily. As to quaternary structure, homodimer or heterodimer.

It localises to the nucleus. Functionally, since they lack a putative transactivation domain, the small Mafs behave as transcriptional repressors when they dimerize among themselves. However, they act as transcriptional activators by dimerizing with other (usually larger) basic-zipper proteins and recruiting them to specific DNA-binding sites. Small Maf proteins heterodimerize with Fos and may act as competitive repressors of the NF-E2 transcription factor. The sequence is that of Transcription factor MafK (MAFK) from Gallus gallus (Chicken).